The chain runs to 196 residues: uncharacterized protein (196 aa).

Residues 11-31 (ICGFLLVILTIGGVLGGVYLV) form a helical membrane-spanning segment.

Its subcellular location is the membrane. This is an uncharacterized protein from Mycoplasma genitalium (strain ATCC 33530 / DSM 19775 / NCTC 10195 / G37) (Mycoplasmoides genitalium).